The sequence spans 617 residues: UvrABC system protein C (617 aa).

Residues 22–100 (KLPGVYRFFD…IKALSPKYNI (79 aa)) enclose the GIY-YIG domain. The UVR domain occupies 209-244 (DELTRTLQHKMQTAAANLQFEEAARYRDQIQALGII).

It belongs to the UvrC family. Interacts with UvrB in an incision complex.

The protein localises to the cytoplasm. Functionally, the UvrABC repair system catalyzes the recognition and processing of DNA lesions. UvrC both incises the 5' and 3' sides of the lesion. The N-terminal half is responsible for the 3' incision and the C-terminal half is responsible for the 5' incision. The chain is UvrABC system protein C from Neisseria gonorrhoeae (strain ATCC 700825 / FA 1090).